The following is a 127-amino-acid chain: Fumarate reductase subunit C (127 aa).

The next 3 membrane-spanning stretches (helical) occupy residues 30-50 (ATVL…GSLV), 67-87 (VVIA…HTFF), and 107-127 (IIVL…LIVV).

The protein belongs to the FrdC family. Part of an enzyme complex containing four subunits: a flavoprotein (FrdA), an iron-sulfur protein (FrdB), and two hydrophobic anchor proteins (FrdC and FrdD).

It is found in the cell inner membrane. Anchors the catalytic components of the fumarate reductase complex to the cell membrane, binds quinones. This is Fumarate reductase subunit C from Vibrio vulnificus (strain CMCP6).